Consider the following 98-residue polypeptide: MLADKVKLSAKEILEKEFKTGVRGYKQEDVDKFLDMVIKDYEAFHQEIEELQQENLQLKKQLEEANKRQPAQSNTTNFDILKRLSNLEKHVFGSKLYD.

Positions 34-72 (LDMVIKDYEAFHQEIEELQQENLQLKKQLEEANKRQPAQ) form a coiled coil.

It belongs to the GpsB family. As to quaternary structure, forms polymers through the coiled coil domains. Interacts with PBP1, MreC and EzrA.

Its subcellular location is the cytoplasm. Its function is as follows. Divisome component that associates with the complex late in its assembly, after the Z-ring is formed, and is dependent on DivIC and PBP2B for its recruitment to the divisome. Together with EzrA, is a key component of the system that regulates PBP1 localization during cell cycle progression. Its main role could be the removal of PBP1 from the cell pole after pole maturation is completed. Also contributes to the recruitment of PBP1 to the division complex. Not essential for septum formation. The chain is Cell cycle protein GpsB from Bacillus licheniformis (strain ATCC 14580 / DSM 13 / JCM 2505 / CCUG 7422 / NBRC 12200 / NCIMB 9375 / NCTC 10341 / NRRL NRS-1264 / Gibson 46).